The chain runs to 780 residues: Aconitate hydratase, mitochondrial (780 aa).

The N-terminal 27 residues, 1–27, are a transit peptide targeting the mitochondrion; sequence MAPYSLLVSRLQKALGARQYHVASVLC. Position 31 is an N6-succinyllysine (lysine 31). N6-acetyllysine; alternate is present on lysine 50. Lysine 50 is subject to N6-succinyllysine; alternate. Glutamine 99 contributes to the substrate binding site. Residues lysine 138 and lysine 144 each carry the N6-acetyllysine; alternate modification. An N6-succinyllysine; alternate mark is found at lysine 138 and lysine 144. A substrate-binding site is contributed by 192–194; sequence DSH. Lysine 233 is subject to N6-acetyllysine; alternate. Position 233 is an N6-succinyllysine; alternate (lysine 233). Cysteine 385 is a [4Fe-4S] cluster binding site. Lysine 411 carries the post-translational modification N6-succinyllysine. 2 residues coordinate [4Fe-4S] cluster: cysteine 448 and cysteine 451. Substrate-binding residues include arginine 474 and arginine 479. An N6-acetyllysine; alternate mark is found at lysine 517 and lysine 523. N6-succinyllysine; alternate occurs at positions 517 and 523. Over residues 524 to 537 the composition is skewed to basic and acidic residues; the sequence is LEAPDADELPRAEF. A disordered region spans residues 524 to 560; the sequence is LEAPDADELPRAEFDPGQDTYQHPPKDSSGQQVDVSP. Lysine 549 is modified (N6-succinyllysine). The span at 551–560 shows a compositional bias: polar residues; sequence SSGQQVDVSP. The residue at position 559 (serine 559) is a Phosphoserine. Residue lysine 573 is modified to N6-acetyllysine; alternate. Position 573 is an N6-succinyllysine; alternate (lysine 573). At lysine 591 the chain carries N6-succinyllysine. Lysine 605 carries the N6-acetyllysine; alternate modification. Lysine 605 carries the N6-succinyllysine; alternate modification. Arginine 607 serves as a coordination point for substrate. An N6-succinyllysine modification is found at lysine 628. Serine 670 bears the Phosphoserine mark. A substrate-binding site is contributed by 670–671; sequence SR. Lysine 689 bears the N6-succinyllysine mark. N6-acetyllysine; alternate is present on residues lysine 723 and lysine 730. An N6-succinyllysine; alternate mark is found at lysine 723 and lysine 730. N6-acetyllysine is present on residues lysine 736 and lysine 743.

The protein belongs to the aconitase/IPM isomerase family. Monomer. Requires [4Fe-4S] cluster as cofactor. In terms of processing, forms covalent cross-links mediated by transglutaminase TGM2, between a glutamine and the epsilon-amino group of a lysine residue, forming homopolymers and heteropolymers.

It is found in the mitochondrion. It carries out the reaction citrate = D-threo-isocitrate. It functions in the pathway carbohydrate metabolism; tricarboxylic acid cycle; isocitrate from oxaloacetate: step 2/2. Catalyzes the isomerization of citrate to isocitrate via cis-aconitate. This is Aconitate hydratase, mitochondrial (ACO2) from Bos taurus (Bovine).